The chain runs to 597 residues: Lipoprotein LpqB (597 aa).

A signal peptide spans 1–28 (MTPGSRSAMRSRSVCGAIALAVLVTVSG). The N-palmitoyl cysteine moiety is linked to residue C29. C29 carries S-diacylglycerol cysteine lipidation. Polar residues predominate over residues 39 to 51 (QAIGTINRDSPGS). The segment at 39–59 (QAIGTINRDSPGSSVAAPAPG) is disordered.

The protein belongs to the LpqB lipoprotein family.

Its subcellular location is the cell membrane. This chain is Lipoprotein LpqB, found in Rhodococcus opacus (strain B4).